The sequence spans 857 residues: Leucine--tRNA ligase (857 aa).

A 'HIGH' region motif is present at residues 42–52 (PYPSGKLHMGH). The short motif at 620-624 (KMSKS) is the 'KMSKS' region element. Residue Lys623 participates in ATP binding.

Belongs to the class-I aminoacyl-tRNA synthetase family.

The protein resides in the cytoplasm. It catalyses the reaction tRNA(Leu) + L-leucine + ATP = L-leucyl-tRNA(Leu) + AMP + diphosphate. This Thiobacillus denitrificans (strain ATCC 25259 / T1) protein is Leucine--tRNA ligase.